A 108-amino-acid polypeptide reads, in one-letter code: Thaicobrin (108 aa).

In terms of domain architecture, B30.2/SPRY spans Ser1–Gly108.

It belongs to the ohanin/vespryn family. Expressed by the venom gland.

The protein localises to the secreted. Functionally, neurotoxin that produces dose-dependent hypolocomotion and hyperalgesia in mice. May directly act on the central nervous system, as it is 6500-fold more potent when administered intracerebroventricularly than intraperitoneal. This chain is Thaicobrin, found in Naja kaouthia (Monocled cobra).